Consider the following 321-residue polypeptide: Ribosomal RNA small subunit methyltransferase H (321 aa).

S-adenosyl-L-methionine is bound by residues 44 to 46 (GGH), D64, F88, D109, and Q116.

This sequence belongs to the methyltransferase superfamily. RsmH family.

Its subcellular location is the cytoplasm. It carries out the reaction cytidine(1402) in 16S rRNA + S-adenosyl-L-methionine = N(4)-methylcytidine(1402) in 16S rRNA + S-adenosyl-L-homocysteine + H(+). Specifically methylates the N4 position of cytidine in position 1402 (C1402) of 16S rRNA. The chain is Ribosomal RNA small subunit methyltransferase H from Methylobacillus flagellatus (strain ATCC 51484 / DSM 6875 / VKM B-1610 / KT).